A 59-amino-acid polypeptide reads, in one-letter code: Large ribosomal subunit protein uL30 (59 aa).

The protein belongs to the universal ribosomal protein uL30 family. Part of the 50S ribosomal subunit.

The chain is Large ribosomal subunit protein uL30 from Alkaliphilus oremlandii (strain OhILAs) (Clostridium oremlandii (strain OhILAs)).